Reading from the N-terminus, the 285-residue chain is Probable endonuclease 4 (285 aa).

The Zn(2+) site is built by His69, His109, Glu145, Asp179, His182, His216, Asp229, His231, and Glu261.

The protein belongs to the AP endonuclease 2 family. It depends on Zn(2+) as a cofactor.

It catalyses the reaction Endonucleolytic cleavage to 5'-phosphooligonucleotide end-products.. In terms of biological role, endonuclease IV plays a role in DNA repair. It cleaves phosphodiester bonds at apurinic or apyrimidinic (AP) sites, generating a 3'-hydroxyl group and a 5'-terminal sugar phosphate. This Salmonella typhi protein is Probable endonuclease 4.